The primary structure comprises 807 residues: Glycerol-3-phosphate acyltransferase (807 aa).

An HXXXXD motif motif is present at residues 309-314 (CHRSHM).

It belongs to the GPAT/DAPAT family.

It localises to the cell inner membrane. The catalysed reaction is sn-glycerol 3-phosphate + an acyl-CoA = a 1-acyl-sn-glycero-3-phosphate + CoA. Its pathway is phospholipid metabolism; CDP-diacylglycerol biosynthesis; CDP-diacylglycerol from sn-glycerol 3-phosphate: step 1/3. The protein is Glycerol-3-phosphate acyltransferase of Aeromonas hydrophila subsp. hydrophila (strain ATCC 7966 / DSM 30187 / BCRC 13018 / CCUG 14551 / JCM 1027 / KCTC 2358 / NCIMB 9240 / NCTC 8049).